Consider the following 987-residue polypeptide: Pentatricopeptide repeat-containing protein At1g06710, mitochondrial (987 aa).

Residues 1-42 (MNKTVVRCLLSRSHHPLIHFSTNLSLLHRVFTCSRYLTARFM) constitute a mitochondrion transit peptide. 22 PPR repeats span residues 164–198 (TAPVYNALVDLIVRDDDEKVPEEFLQQIRDDDKEV), 199–233 (FGEFLNVLVRKHCRNGSFSIALEELGRLKDFRFRP), 234–268 (SRSTYNCLIQAFLKADRLDSASLIHREMSLANLRM), 269–299 (DGFTLRCFAYSLCKVGKWREALTLVETENFV), 301–335 (DTVFYTKLISGLCEASLFEEAMDFLNRMRATSCLP), 336–370 (NVVTYSTLLCGCLNKKQLGRCKRVLNMMMMEGCYP), 371–405 (SPKIFNSLVHAYCTSGDHSYAYKLLKKMVKCGHMP), 406–446 (GYVV…GVVL), 447–481 (NKINVSSFTRCLCSAGKYEKAFSVIREMIGQGFIP), 482–516 (DTSTYSKVLNYLCNASKMELAFLLFEEMKRGGLVA), 517–551 (DVYTYTIMVDSFCKAGLIEQARKWFNEMREVGCTP), 552–586 (NVVTYTALIHAYLKAKKVSYANELFETMLSEGCLP), 587–621 (NIVTYSALIDGHCKAGQVEKACQIFERMCGSKDVP), 638–672 (NVVTYGALLDGFCKSHRVEEARKLLDAMSMEGCEP), 673–707 (NQIVYDALIDGLCKVGKLDEAQEVKTEMSEHGFPA), 708–742 (TLYTYSSLIDRYFKVKRQDLASKVLSKMLENSCAP), 743–777 (NVVIYTEMIDGLCKVGKTDEAYKLMQMMEEKGCQP), 778–812 (NVVTYTAMIDGFGMIGKIETCLELLERMGSKGVAP), 813–847 (NYVTYRVLIDHCCKNGALDVAHNLLEEMKQTHWPT), 881–915 (FLSVYRLLIDNLIKAQRLEMALRLLEEVATFSATL), 918–952 (YSSTYNSLIESLCLANKVETAFQLFSEMTKKGVIP), and 953–987 (EMQSFCSLIKGLFRNSKISEALLLLDFISHMVCPL).

This sequence belongs to the PPR family. P subfamily.

It is found in the mitochondrion. The protein is Pentatricopeptide repeat-containing protein At1g06710, mitochondrial of Arabidopsis thaliana (Mouse-ear cress).